A 513-amino-acid polypeptide reads, in one-letter code: Cobyric acid synthase (513 aa).

The 201-residue stretch at 270-470 (RLRIAIVAYP…THGLFESPAV (201 aa)) folds into the GATase cobBQ-type domain. Cys351 acts as the Nucleophile in catalysis. His462 is an active-site residue.

This sequence belongs to the CobB/CobQ family. CobQ subfamily.

Its pathway is cofactor biosynthesis; adenosylcobalamin biosynthesis. Functionally, catalyzes amidations at positions B, D, E, and G on adenosylcobyrinic A,C-diamide. NH(2) groups are provided by glutamine, and one molecule of ATP is hydrogenolyzed for each amidation. The polypeptide is Cobyric acid synthase (Leptothrix cholodnii (strain ATCC 51168 / LMG 8142 / SP-6) (Leptothrix discophora (strain SP-6))).